A 339-amino-acid polypeptide reads, in one-letter code: Protein H339R (339 aa).

Belongs to the asfivirus H339R family. Interacts with host NACA (alpha chain of nascent polypeptide-associated complex).

It is found in the host cytoplasm. The protein localises to the host nucleus. In African swine fever virus (isolate Tick/South Africa/Pretoriuskop Pr4/1996) (ASFV), this protein is Protein H339R.